A 1500-amino-acid chain; its full sequence is MTRILTAFKVVRTLKTGFGFTNVTAHQKWKFSRPGIRLLSVKAQTAHIVLEDGTKMKGYSFGHPSSVAGEVVFNTGLGGYPEAITDPAYKGQILTMANPIIGNGGAPDTTALDELGLSKYLESNGIKVSGLLVLDYSKDYNHWLATKSLGQWLQEEKVPAIYGVDTRMLTKIIRDKGTMLGKIEFEGQPVDFVDPNKQNLIAEVSTKDVKVYGKGNPTKVVAVDCGIKNNVIRLLVKRGAEVHLVPWNHDFTKMEYDGILIAGGPGNPALAEPLIQNVRKILESDRKEPLFGISTGNLITGLAAGAKTYKMSMANRGQNQPVLNITNKQAFITAQNHGYALDNTLPAGWKPLFVNVNDQTNEGIMHESKPFFAVQFHPEVTPGPIDTEYLFDSFFSLIKKGKATTITSVLPKPALVASRVEVSKVLILGSGGLSIGQAGEFDYSGSQAVKAMKEENVKTVLMNPNIASVQTNEVGLKQADTVYFLPITPQFVTEVIKAEQPDGLILGMGGQTALNCGVELFKRGVLKEYGVKVLGTSVESIMATEDRQLFSDKLNEINEKIAPSFAVESIEDALKAADTIGYPVMIRSAYALGGLGSGICPNRETLMDLSTKAFAMTNQILVEKSVTGWKEIEYEVVRDADDNCVTVCNMENVDAMGVHTGDSVVVAPAQTLSNAEFQMLRRTSINVVRHLGIVGECNIQFALHPTSMEYCIIEVNARLSRSSALASKATGYPLAFIAAKIALGIPLPEIKNVVSGKTSACFEPSLDYMVTKIPRWDLDRFHGTSSRIGSSMKSVGEVMAIGRTFEESFQKALRMCHPSIEGFTPRLPMNKEWPSNLDLRKELSEPSSTRIYAIAKAIDDNMSLDEIEKLTYIDKWFLYKMRDILNMEKTLKGLNSESMTEETLKRAKEIGFSDKQISKCLGLTEAQTRELRLKKNIHPWVKQIDTLAAEYPSVTNYLYVTYNGQEHDVNFDDHGMMVLGCGPYHIGSSVEFDWCAVSSIRTLRQLGKKTVVVNCNPETVSTDFDECDKLYFEELSLERILDIYHQEACGGCIISVGGQIPNNLAVPLYKNGVKIMGTSPLQIDRAEDRSIFSAVLDELKVAQAPWKAVNTLNEALEFAKSVDYPCLLRPSYVLSGSAMNVVFSEDEMKKFLEEATRVSQEHPVVLTKFVEGAREVEMDAVGKDGRVISHAISEHVEDAGVHSGDATLMLPTQTISQGAIEKVKDATRKIAKAFAISGPFNVQFLVKGNDVLVIECNLRASRSFPFVSKTLGVDFIDVATKVMIGENVDEKHLPTLDHPIIPADYVAIKAPMFSWPRLRDADPILRCEMASTGEVACFGEGIHTAFLKAMLSTGFKIPQKGILIGIQQSFRPRFLGVAEQLHNEGFKLFATEATSDWLNANNVPATPVAWPSQEGQNPSLSSIRKLIRDGSIDLVINLPNNNTKFVHDNYVIRRTAVDSGIPLLTNFQVTKLFAEAVQKSRKVDSKSLFHYRQYSAGKAA.

The N-terminal 38 residues, 1–38 (MTRILTAFKVVRTLKTGFGFTNVTAHQKWKFSRPGIRL), are a transit peptide targeting the mitochondrion. The tract at residues 39–218 (LSVKAQTAHI…VKVYGKGNPT (180 aa)) is anthranilate phosphoribosyltransferase homolog. An N6-acetyllysine; alternate mark is found at Lys55, Lys57, and Lys119. Position 55 is an N6-glutaryllysine; alternate (Lys55). N6-succinyllysine; alternate occurs at positions 55, 57, and 119. Ser148 is subject to Phosphoserine. An N6-acetyllysine; alternate mark is found at Lys157 and Lys171. Position 157 is an N6-succinyllysine; alternate (Lys157). An N6-glutaryllysine; alternate modification is found at Lys171. Residue Lys176 is modified to N6-glutaryllysine. Lys182 and Lys197 each carry N6-acetyllysine. N6-acetyllysine; alternate occurs at positions 207, 210, 214, 219, and 228. Lys207, Lys210, Lys214, Lys219, and Lys228 each carry N6-glutaryllysine; alternate. Lys207 carries the N6-succinyllysine; alternate modification. Lys214 carries the N6-succinyllysine; alternate modification. Positions 219–404 (KVVAVDCGIK…FSLIKKGKAT (186 aa)) constitute a Glutamine amidotransferase type-1 domain. Lys237 is subject to N6-glutaryllysine. N6-acetyllysine; alternate is present on residues Lys280, Lys287, Lys307, and Lys310. N6-glutaryllysine; alternate is present on Lys280. N6-succinyllysine; alternate occurs at positions 287 and 307. 2 positions are modified to N6-glutaryllysine; alternate: Lys307 and Lys310. At Lys400 the chain carries N6-succinyllysine. An N6-glutaryllysine; alternate mark is found at Lys402, Lys412, Lys453, and Lys458. Lys402 and Lys412 each carry N6-succinyllysine; alternate. 6 positions are modified to N6-acetyllysine; alternate: Lys412, Lys453, Lys458, Lys522, Lys527, and Lys532. An N6-succinyllysine; alternate mark is found at Lys458, Lys522, and Lys527. 2 positions are modified to N6-glutaryllysine; alternate: Lys527 and Lys532. The residue at position 537 (Ser537) is a Phosphoserine; alternate. An O-linked (GlcNAc) serine; alternate glycan is attached at Ser537. Ser540 is modified (phosphoserine). In terms of domain architecture, ATP-grasp 1 spans 551 to 743 (SDKLNEINEK…LAFIAAKIAL (193 aa)). Residues Lys553 and Lys560 each carry the N6-acetyllysine; alternate modification. Lys553 carries the post-translational modification N6-glutaryllysine; alternate. 2 positions are modified to N6-succinyllysine; alternate: Lys553 and Lys560. Position 569 is a phosphoserine (Ser569). An N6-acetyllysine; alternate mark is found at Lys575 and Lys612. Residues Lys575 and Lys612 each carry the N6-succinyllysine; alternate modification. Lys630 is subject to N6-acetyllysine. An N6-glutaryllysine modification is found at Lys728. Lys751, Lys757, Lys772, Lys793, Lys811, and Lys831 each carry N6-acetyllysine; alternate. Residues Lys751 and Lys757 each carry the N6-succinyllysine; alternate modification. N6-glutaryllysine; alternate is present on residues Lys757, Lys772, Lys793, and Lys811. Position 793 is an N6-succinyllysine; alternate (Lys793). Lys831 is subject to N6-succinyllysine; alternate. Ser835 is subject to Phosphoserine. An N6-acetyllysine; alternate mark is found at Lys841 and Lys856. An N6-glutaryllysine; alternate mark is found at Lys841 and Lys856. The residue at position 869 (Lys869) is an N6-glutaryllysine. N6-acetyllysine; alternate occurs at positions 875, 889, and 892. N6-glutaryllysine; alternate occurs at positions 875, 889, and 892. N6-succinyllysine; alternate occurs at positions 875, 889, and 892. A phosphoserine mark is found at Ser896 and Ser898. Position 905 is an N6-glutaryllysine (Lys905). An N6-acetyllysine; alternate mark is found at Lys908, Lys915, and Lys919. 3 positions are modified to N6-glutaryllysine; alternate: Lys908, Lys915, and Lys919. 2 positions are modified to N6-succinyllysine; alternate: Lys915 and Lys919. Position 935 is an N6-acetyllysine (Lys935). A Phosphoserine modification is found at Ser1036. Position 1074 is an N6-acetyllysine; alternate (Lys1074). Lys1074 bears the N6-glutaryllysine; alternate mark. Lys1074 carries the N6-succinyllysine; alternate modification. Ser1079, Ser1090, and Ser1093 each carry phosphoserine. An ATP-grasp 2 domain is found at 1093–1284 (SAVLDELKVA…FIDVATKVMI (192 aa)). Lys1100 is subject to N6-acetyllysine; alternate. Lys1100 bears the N6-succinyllysine; alternate mark. Lys1149 carries the post-translational modification N6-succinyllysine. Lys1150 bears the N6-glutaryllysine mark. An N6-acetyllysine; alternate mark is found at Lys1168 and Lys1183. An N6-glutaryllysine; alternate mark is found at Lys1168 and Lys1183. An N6-succinyllysine; alternate mark is found at Lys1168 and Lys1183. At Ser1203 the chain carries Phosphoserine. The residue at position 1222 (Lys1222) is an N6-acetyllysine. Position 1224 is an N6-glutaryllysine (Lys1224). An N6-acetyllysine; alternate mark is found at Lys1232, Lys1269, and Lys1291. Lys1232, Lys1269, and Lys1291 each carry N6-succinyllysine; alternate. The O-linked (GlcNAc) serine glycan is linked to Ser1331. Residue Thr1332 is glycosylated (O-linked (GlcNAc) threonine). The 146-residue stretch at 1355-1500 (FKIPQKGILI…YRQYSAGKAA (146 aa)) folds into the MGS-like domain. Lys1356 is modified (N6-acetyllysine; alternate). 2 positions are modified to N6-glutaryllysine; alternate: Lys1356 and Lys1360. Lys1356 and Lys1360 each carry N6-succinyllysine; alternate. N-acetyl-L-glutamate-binding residues include Thr1391, Thr1394, and Trp1410. Phosphoserine is present on residues Ser1419 and Ser1431. Residues Asn1437 and Asn1440 each coordinate N-acetyl-L-glutamate. Lys1444 bears the N6-acetyllysine; alternate mark. An N6-succinyllysine; alternate modification is found at Lys1444. An N-acetyl-L-glutamate-binding site is contributed by Asn1449. Residues Lys1471, Lys1479, and Lys1486 each carry the N6-acetyllysine; alternate modification. Residues Lys1471, Lys1479, and Lys1486 each carry the N6-succinyllysine; alternate modification. An N6-glutaryllysine; alternate mark is found at Lys1479 and Lys1486.

Can form homooligomers (monomers as predominant form and dimers). Undergoes proteolytic cleavage in the C-terminal region corresponding to the loss of approximately 12 AA residues from the C-terminus. In terms of processing, succinylated at Lys-287 and Lys-1291. Desuccinylated at Lys-1291 by SIRT5, leading to activation. Post-translationally, glutarylated. Glutarylation levels increase during fasting. Deglutarylated by SIRT5 at Lys-55, Lys-219, Lys-412, Lys-889, Lys-892, Lys-915, Lys-1360 and Lys-1486, leading to activation. Primarily in the liver and small intestine.

It is found in the mitochondrion. The protein resides in the nucleus. Its subcellular location is the nucleolus. The protein localises to the cell membrane. It carries out the reaction hydrogencarbonate + NH4(+) + 2 ATP = carbamoyl phosphate + 2 ADP + phosphate + 2 H(+). Its activity is regulated as follows. Requires N-acetyl-L-glutamate (NAG) as an allosteric activator. Activated by glycerol in the absence of NAG, whereas in the presence of NAG it is inhibited by increasing concentrations of glycerol. Functionally, involved in the urea cycle of ureotelic animals where the enzyme plays an important role in removing excess ammonia from the cell. This chain is Carbamoyl-phosphate synthase [ammonia], mitochondrial (CPS1), found in Homo sapiens (Human).